The following is a 126-amino-acid chain: Prefoldin subunit beta (126 aa).

This sequence belongs to the prefoldin subunit beta family. In terms of assembly, heterohexamer of two alpha and four beta subunits.

The protein resides in the cytoplasm. Molecular chaperone capable of stabilizing a range of proteins. Seems to fulfill an ATP-independent, HSP70-like function in archaeal de novo protein folding. The polypeptide is Prefoldin subunit beta (Pyrobaculum neutrophilum (strain DSM 2338 / JCM 9278 / NBRC 100436 / V24Sta) (Thermoproteus neutrophilus)).